A 461-amino-acid polypeptide reads, in one-letter code: 23S rRNA (uracil(1939)-C(5))-methyltransferase RlmD (461 aa).

The interval 1-26 is disordered; the sequence is MAKHERGLRFQPTGGSKAPQIPTGKK. The TRAM domain occupies 20–78; the sequence is QIPTGKKQRLSIERLANDGRGIAFFEGKTWFVLGALAGEEVEARVLGAHGKVVEARTER. Residues Cys-91, Cys-97, Cys-100, and Cys-179 each contribute to the [4Fe-4S] cluster site. Residues Gln-283, Phe-312, Asn-317, Glu-333, Asp-360, and Asp-381 each coordinate S-adenosyl-L-methionine. Cys-407 acts as the Nucleophile in catalysis.

It belongs to the class I-like SAM-binding methyltransferase superfamily. RNA M5U methyltransferase family. RlmD subfamily.

The enzyme catalyses uridine(1939) in 23S rRNA + S-adenosyl-L-methionine = 5-methyluridine(1939) in 23S rRNA + S-adenosyl-L-homocysteine + H(+). Functionally, catalyzes the formation of 5-methyl-uridine at position 1939 (m5U1939) in 23S rRNA. This chain is 23S rRNA (uracil(1939)-C(5))-methyltransferase RlmD, found in Pseudomonas fluorescens (strain Pf0-1).